The primary structure comprises 302 residues: Cyclopropane mycolic acid synthase 2 (302 aa).

Residues 41–42 (YS), 76–84 (LLDIGCGWG), 102–107 (TLSENQ), and 131–132 (WE) contribute to the S-adenosyl-L-methionine site. C284 is a catalytic residue.

Belongs to the CFA/CMAS family. Homodimer.

The protein localises to the cytoplasm. The enzyme catalyses a 1-acyl-2-(9Z)-enoyl-sn-glycero-3-phospholipid + S-adenosyl-L-methionine = a 1-acyl-2-(9-cyclopronane)-acyl-sn-glycero-3-phospholipid + S-adenosyl-L-homocysteine + H(+). The protein operates within lipid metabolism; mycolic acid biosynthesis. Functionally, catalyzes the formation of trans cyclopropanated ketomycolate or methoxymycolate through the conversion of a double bond to a cyclopropane ring at the proximal position of an oxygenated mycolic acid via the transfer of a methylene group from S-adenosyl-L-methionine. In the absence of MmaA2, CmaA2 has a non-specific cis-cyclopropanating activity and is able to catalyze the conversion of a double bond to a cis cyclopropane ring at the distal position of an alpha mycolic acid. Cyclopropanated mycolic acids are key factors participating in cell envelope permeability, host immunomodulation and persistence. This chain is Cyclopropane mycolic acid synthase 2 (cmaA2), found in Mycobacterium bovis (strain ATCC BAA-935 / AF2122/97).